A 201-amino-acid polypeptide reads, in one-letter code: Ribonuclease HII (201 aa).

In terms of domain architecture, RNase H type-2 spans Leu-10 to Ser-200. Residues Asp-16, Glu-17, and Asp-108 each contribute to the a divalent metal cation site.

Belongs to the RNase HII family. Mn(2+) serves as cofactor. Mg(2+) is required as a cofactor.

The protein resides in the cytoplasm. It carries out the reaction Endonucleolytic cleavage to 5'-phosphomonoester.. Functionally, endonuclease that specifically degrades the RNA of RNA-DNA hybrids. The protein is Ribonuclease HII of Bacteroides fragilis (strain ATCC 25285 / DSM 2151 / CCUG 4856 / JCM 11019 / LMG 10263 / NCTC 9343 / Onslow / VPI 2553 / EN-2).